A 167-amino-acid polypeptide reads, in one-letter code: Leukotoxin-activating lysine-acyltransferase LktC serotype T3 (167 aa).

Active-site residues include H22 and D91.

It belongs to the RTX toxin acyltransferase family.

The protein localises to the cytoplasm. It carries out the reaction a fatty acyl-[ACP] + L-lysyl-[protein] = N(6)-(fatty acyl)-L-lysyl-[protein] + holo-[ACP] + H(+). Functionally, involved in fatty acylation of the protoxin (LktA) at two internal lysine residues, thereby converting it to the active toxin. This chain is Leukotoxin-activating lysine-acyltransferase LktC serotype T3 (lktC), found in Mannheimia haemolytica (Pasteurella haemolytica).